Consider the following 528-residue polypeptide: Exodeoxyribonuclease 7 large subunit (528 aa).

Positions 486 to 528 (QGDRDAVIDGESSGVLPPSAAPAPTRPTPRPKPASSSDQGSLF) are disordered. Residues 504–517 (SAAPAPTRPTPRPK) are compositionally biased toward pro residues.

Belongs to the XseA family. Heterooligomer composed of large and small subunits.

Its subcellular location is the cytoplasm. The enzyme catalyses Exonucleolytic cleavage in either 5'- to 3'- or 3'- to 5'-direction to yield nucleoside 5'-phosphates.. In terms of biological role, bidirectionally degrades single-stranded DNA into large acid-insoluble oligonucleotides, which are then degraded further into small acid-soluble oligonucleotides. The chain is Exodeoxyribonuclease 7 large subunit from Caulobacter sp. (strain K31).